The sequence spans 314 residues: Mycothiol acetyltransferase (314 aa).

A 1D-myo-inositol 2-(L-cysteinylamino)-2-deoxy-alpha-D-glucopyranoside-binding site is contributed by E39. 80-82 (LTA) is a binding site for acetyl-CoA. One can recognise an N-acetyltransferase domain in the interval 159–313 (FVCRRFDPIS…PTGELGHEPP (155 aa)). Positions 186, 228, and 237 each coordinate 1D-myo-inositol 2-(L-cysteinylamino)-2-deoxy-alpha-D-glucopyranoside. Residues 241–243 (LGV) and 248–254 (QGQGVGR) contribute to the acetyl-CoA site. Y275 lines the 1D-myo-inositol 2-(L-cysteinylamino)-2-deoxy-alpha-D-glucopyranoside pocket.

It belongs to the acetyltransferase family. MshD subfamily. Monomer.

It catalyses the reaction 1D-myo-inositol 2-(L-cysteinylamino)-2-deoxy-alpha-D-glucopyranoside + acetyl-CoA = mycothiol + CoA + H(+). Its function is as follows. Catalyzes the transfer of acetyl from acetyl-CoA to desacetylmycothiol (Cys-GlcN-Ins) to form mycothiol. This Jonesia denitrificans (strain ATCC 14870 / DSM 20603 / BCRC 15368 / CIP 55.134 / JCM 11481 / NBRC 15587 / NCTC 10816 / Prevot 55134) (Listeria denitrificans) protein is Mycothiol acetyltransferase.